The chain runs to 40 residues: Mu-thomitoxin-Hme1b (40 aa).

3 disulfide bridges follow: C2/C18, C9/C22, and C17/C33.

This sequence belongs to the neurotoxin 19 (CSTX) family. Contains 3 disulfide bonds. In terms of tissue distribution, expressed by the venom gland.

The protein resides in the secreted. Its function is as follows. Blocks the Nav1.2/SCN2A, Nav1.4/SCN4A, Nav1.5/SCN5A and Nav1.6/SCN8A sodium channels. Shows a slight preference for the Nav1.2 and Nav1.4 channels. Reduces the peak amplitude of the sodium current and negatively shifts the steady-state inactivation process. Does not shift the threshold potential of activation or the voltage corresponding to maximal current. Does not change the reversal potential of the sodium current. May act on site 1 of the receptor. The chain is Mu-thomitoxin-Hme1b from Heriaeus mellotteei (Crab spider).